Consider the following 111-residue polypeptide: Cell cycle protein GpsB (111 aa).

Residues 32–63 (LDDIMKDYDAYEAIIKELKGEIARLKAQAANS) are a coiled coil. Positions 59–80 (QAANSPKTTLPTEESNDVLRTE) are disordered. Polar residues predominate over residues 60–71 (AANSPKTTLPTE).

The protein belongs to the GpsB family. Forms polymers through the coiled coil domains. Interacts with PBP1, MreC and EzrA.

The protein localises to the cytoplasm. Divisome component that associates with the complex late in its assembly, after the Z-ring is formed, and is dependent on DivIC and PBP2B for its recruitment to the divisome. Together with EzrA, is a key component of the system that regulates PBP1 localization during cell cycle progression. Its main role could be the removal of PBP1 from the cell pole after pole maturation is completed. Also contributes to the recruitment of PBP1 to the division complex. Not essential for septum formation. The chain is Cell cycle protein GpsB from Streptococcus suis (strain 98HAH33).